A 68-amino-acid chain; its full sequence is uncharacterized protein (68 aa).

Positions 1–27 (MNEFEKWIEGRYEPHEQKQKEHEDTMG) are disordered.

This is an uncharacterized protein from Bacillus subtilis (strain 168).